Here is a 271-residue protein sequence, read N- to C-terminus: 3-methyl-2-oxobutanoate hydroxymethyltransferase (271 aa).

Mg(2+)-binding residues include Asp52 and Asp91. 3-methyl-2-oxobutanoate contacts are provided by residues 52–53 (DS), Asp91, and Lys121. Glu123 is a Mg(2+) binding site. Glu189 (proton acceptor) is an active-site residue.

The protein belongs to the PanB family. As to quaternary structure, homodecamer; pentamer of dimers. It depends on Mg(2+) as a cofactor.

Its subcellular location is the cytoplasm. It catalyses the reaction 3-methyl-2-oxobutanoate + (6R)-5,10-methylene-5,6,7,8-tetrahydrofolate + H2O = 2-dehydropantoate + (6S)-5,6,7,8-tetrahydrofolate. It participates in cofactor biosynthesis; (R)-pantothenate biosynthesis; (R)-pantoate from 3-methyl-2-oxobutanoate: step 1/2. Functionally, catalyzes the reversible reaction in which hydroxymethyl group from 5,10-methylenetetrahydrofolate is transferred onto alpha-ketoisovalerate to form ketopantoate. This Acidothermus cellulolyticus (strain ATCC 43068 / DSM 8971 / 11B) protein is 3-methyl-2-oxobutanoate hydroxymethyltransferase.